We begin with the raw amino-acid sequence, 53 residues long: Large ribosomal subunit protein eL40 (53 aa).

It belongs to the eukaryotic ribosomal protein eL40 family.

This Pyrobaculum arsenaticum (strain DSM 13514 / JCM 11321 / PZ6) protein is Large ribosomal subunit protein eL40.